The primary structure comprises 396 residues: Succinyl-CoA:mesaconate CoA-transferase (396 aa).

Residue Asp-175 is the Nucleophile of the active site.

Belongs to the CoA-transferase III family.

The catalysed reaction is mesaconate + succinyl-CoA = 2-methylfumaryl-CoA + succinate. Its function is as follows. Involved in the methylaspartate cycle. Catalyzes the transfer of the CoA moiety from succinyl-CoA to mesaconate to generate mesaconyl-CoA (2-methylfumaryl-CoA) and succinate. The chain is Succinyl-CoA:mesaconate CoA-transferase from Haloarcula marismortui (strain ATCC 43049 / DSM 3752 / JCM 8966 / VKM B-1809) (Halobacterium marismortui).